A 405-amino-acid polypeptide reads, in one-letter code: tRNA N6-adenosine threonylcarbamoyltransferase, mitochondrial (405 aa).

The transit peptide at 1–19 (MAKYISNLSRIAVVRGRVS) directs the protein to the mitochondrion. Residues His-138 and His-142 each contribute to the a divalent metal cation site. Substrate-binding positions include 160 to 164 (LISGG), Asp-193, Gly-213, Glu-217, 320 to 321 (SN), and Thr-348. Residue Asp-349 participates in a divalent metal cation binding.

This sequence belongs to the KAE1 / TsaD family. As to quaternary structure, monomer. A divalent metal cation is required as a cofactor.

It is found in the mitochondrion. The enzyme catalyses L-threonylcarbamoyladenylate + adenosine(37) in tRNA = N(6)-L-threonylcarbamoyladenosine(37) in tRNA + AMP + H(+). Its function is as follows. Required for the formation of a threonylcarbamoyl group on adenosine at position 37 (t(6)A37) in mitochondrial tRNAs that read codons beginning with adenine. Probably involved in the transfer of the threonylcarbamoyl moiety of threonylcarbamoyl-AMP (TC-AMP) to the N6 group of A37. Involved in mitochondrial genome maintenance. The sequence is that of tRNA N6-adenosine threonylcarbamoyltransferase, mitochondrial from Xenopus tropicalis (Western clawed frog).